A 1072-amino-acid polypeptide reads, in one-letter code: Carbamoyl phosphate synthase large chain (1072 aa).

The segment at 1 to 401 is carboxyphosphate synthetic domain; it reads MPKYKDISKV…SLLKAVRSLE (401 aa). ATP contacts are provided by R129, R169, G175, G176, K208, L210, E215, G241, V242, H243, Q284, and E298. Residues 133 to 327 enclose the ATP-grasp 1 domain; that stretch reads KRKMQEIGEP…IAKIAAKIAI (195 aa). Mg(2+)-binding residues include Q284, E298, and N300. The Mn(2+) site is built by Q284, E298, and N300. Residues 402–544 form an oligomerization domain region; it reads IKAYGLRLDS…YIYSTYCEED (143 aa). A carbamoyl phosphate synthetic domain region spans residues 545-929; it reads EVETHDIPKV…ALYKALEGAG (385 aa). Positions 671–861 constitute an ATP-grasp 2 domain; sequence SKLLKELNIN…MVKLAVEVAL (191 aa). The ATP site is built by R707, K746, I748, E752, G777, V778, H779, S780, Q820, and E832. Mg(2+)-binding residues include Q820, E832, and N834. Mn(2+) contacts are provided by Q820, E832, and N834. The region spanning 930 to 1072 is the MGS-like domain; the sequence is LKIPKKGKIL…QKDNVKNLVL (143 aa). Positions 930-1072 are allosteric domain; sequence LKIPKKGKIL…QKDNVKNLVL (143 aa).

Belongs to the CarB family. Composed of two chains; the small (or glutamine) chain promotes the hydrolysis of glutamine to ammonia, which is used by the large (or ammonia) chain to synthesize carbamoyl phosphate. Tetramer of heterodimers (alpha,beta)4. It depends on Mg(2+) as a cofactor. Mn(2+) is required as a cofactor.

The enzyme catalyses hydrogencarbonate + L-glutamine + 2 ATP + H2O = carbamoyl phosphate + L-glutamate + 2 ADP + phosphate + 2 H(+). It catalyses the reaction hydrogencarbonate + NH4(+) + 2 ATP = carbamoyl phosphate + 2 ADP + phosphate + 2 H(+). It participates in amino-acid biosynthesis; L-arginine biosynthesis; carbamoyl phosphate from bicarbonate: step 1/1. The protein operates within pyrimidine metabolism; UMP biosynthesis via de novo pathway; (S)-dihydroorotate from bicarbonate: step 1/3. In terms of biological role, large subunit of the glutamine-dependent carbamoyl phosphate synthetase (CPSase). CPSase catalyzes the formation of carbamoyl phosphate from the ammonia moiety of glutamine, carbonate, and phosphate donated by ATP, constituting the first step of 2 biosynthetic pathways, one leading to arginine and/or urea and the other to pyrimidine nucleotides. The large subunit (synthetase) binds the substrates ammonia (free or transferred from glutamine from the small subunit), hydrogencarbonate and ATP and carries out an ATP-coupled ligase reaction, activating hydrogencarbonate by forming carboxy phosphate which reacts with ammonia to form carbamoyl phosphate. In Caldanaerobacter subterraneus subsp. tengcongensis (strain DSM 15242 / JCM 11007 / NBRC 100824 / MB4) (Thermoanaerobacter tengcongensis), this protein is Carbamoyl phosphate synthase large chain.